Reading from the N-terminus, the 517-residue chain is Crotonobetaine/carnitine--CoA ligase (517 aa).

It belongs to the ATP-dependent AMP-binding enzyme family.

It carries out the reaction 4-(trimethylamino)butanoate + ATP + CoA = 4-(trimethylamino)butanoyl-CoA + AMP + diphosphate. It catalyses the reaction crotonobetaine + ATP + CoA = crotonobetainyl-CoA + AMP + diphosphate. The enzyme catalyses (R)-carnitine + ATP + CoA = (R)-carnitinyl-CoA + AMP + diphosphate. It functions in the pathway amine and polyamine metabolism; carnitine metabolism. Functionally, catalyzes the transfer of CoA to carnitine, generating the initial carnitinyl-CoA needed for the CaiB reaction cycle. Also has activity toward crotonobetaine and gamma-butyrobetaine. This chain is Crotonobetaine/carnitine--CoA ligase, found in Escherichia coli O7:K1 (strain IAI39 / ExPEC).